A 205-amino-acid chain; its full sequence is Large ribosomal subunit protein uL18 (205 aa).

The protein belongs to the universal ribosomal protein uL18 family. In terms of assembly, part of the 50S ribosomal subunit. Contacts the 5S and 23S rRNAs.

This is one of the proteins that bind and probably mediate the attachment of the 5S RNA into the large ribosomal subunit, where it forms part of the central protuberance. The protein is Large ribosomal subunit protein uL18 of Pyrobaculum arsenaticum (strain DSM 13514 / JCM 11321 / PZ6).